The sequence spans 460 residues: tRNA modification GTPase MnmE (460 aa).

(6S)-5-formyl-5,6,7,8-tetrahydrofolate-binding residues include arginine 29, glutamate 91, and arginine 131. In terms of domain architecture, TrmE-type G spans 226-383; it reads GLRVALVGRP…LVQAVLERCG (158 aa). K(+) is bound at residue asparagine 236. GTP is bound by residues 236–241, 255–261, and 280–283; these read NVGKSS, TDLPGTT, and DTAG. A Mg(2+)-binding site is contributed by serine 240. 3 residues coordinate K(+): threonine 255, leucine 257, and threonine 260. Residue threonine 261 coordinates Mg(2+). A (6S)-5-formyl-5,6,7,8-tetrahydrofolate-binding site is contributed by lysine 460.

Belongs to the TRAFAC class TrmE-Era-EngA-EngB-Septin-like GTPase superfamily. TrmE GTPase family. As to quaternary structure, homodimer. Heterotetramer of two MnmE and two MnmG subunits. K(+) is required as a cofactor.

The protein resides in the cytoplasm. Functionally, exhibits a very high intrinsic GTPase hydrolysis rate. Involved in the addition of a carboxymethylaminomethyl (cmnm) group at the wobble position (U34) of certain tRNAs, forming tRNA-cmnm(5)s(2)U34. The polypeptide is tRNA modification GTPase MnmE (Synechococcus sp. (strain WH7803)).